A 214-amino-acid chain; its full sequence is Transmembrane emp24 domain-containing protein p24beta3 (214 aa).

A signal peptide spans 1–27 (MERRQAKIHVFVLIGLILLNSINQISS). The Lumenal portion of the chain corresponds to 28-178 (LSVTVNDEEC…RHTNESTRKR (151 aa)). Residues 35-122 (EECVQEYVLY…PETVSFYIHV (88 aa)) form the GOLD domain. The stretch at 140–158 (VNVKIAELREALESVVAEQ) forms a coiled coil. Omega-N-methylated arginine occurs at positions 164 and 169. Asparagine 172 is a glycosylation site (N-linked (GlcNAc...) asparagine). Residues 179-199 (VIFYTVGEYIFLAAASGLQVL) form a helical membrane-spanning segment. The Cytoplasmic segment spans residues 200 to 214 (YIRKLFSKSVAYNRV). A COPII vesicle coat-binding motif is present at residues 204 to 205 (LF). The COPI vesicle coat-binding motif lies at 204–214 (LFSKSVAYNRV). Positions 213-214 (RV) match the Required for the export from the endoplasmic reticulum to the Golgi motif.

This sequence belongs to the EMP24/GP25L family. Probably oligomerizes with other members of the EMP24/GP25L family. Associates with the COPI vesicle coat (coatomer). Associates with the COPII vesicle coat (coatomer).

The protein localises to the golgi apparatus. Its subcellular location is the cis-Golgi network membrane. It localises to the golgi stack membrane. Functionally, involved in vesicular protein trafficking. Mainly functions in the early secretory pathway but also in post-Golgi membranes. Thought to act as cargo receptor at the lumenal side for incorporation of secretory cargo molecules into transport vesicles and to be involved in vesicle coat formation at the cytoplasmic side. The protein is Transmembrane emp24 domain-containing protein p24beta3 of Arabidopsis thaliana (Mouse-ear cress).